The sequence spans 477 residues: Inner membrane transporter YgjI (477 aa).

Residues 1 to 8 (MSDTKRNT) lie on the Periplasmic side of the membrane. A helical transmembrane segment spans residues 9–29 (IGKFGLLSLTFAAVYSFNNVI). At 30–41 (NNNIELGLASAP) the chain is on the cytoplasmic side. A helical transmembrane segment spans residues 42-62 (MFFLATIFYFIPFCLIIAEFV). At 63–83 (SLNKNSEAGVYAWVKSSLGGR) the chain is on the periplasmic side. The chain crosses the membrane as a helical span at residues 84–104 (WAFITAYTYWFVNLFFFTSLL). The Cytoplasmic segment spans residues 105–120 (PRVIAYASYAFLGYEY). The helical transmembrane segment at 121–141 (IMTPVATTIISMVLFAFSTWV) threads the bilayer. Residues 142–158 (STNGAKMLGPITSVTST) are Periplasmic-facing. Residues 159–179 (LMLLLTLSYILLAGTALVGGV) form a helical membrane-spanning segment. The Cytoplasmic portion of the chain corresponds to 180–196 (QPADAITVDAMIPNFNW). The chain crosses the membrane as a helical span at residues 197-217 (AFLGVTTWIFMAAGGAESVAV). Residues 218 to 232 (YVNDVKGGSKSFVKV) are Periplasmic-facing. Residues 233–253 (IILAGIFIGVLYSVSSVLINV) form a helical membrane-spanning segment. Topologically, residues 254 to 263 (FVSSKELKFT) are cytoplasmic. The chain crosses the membrane as a helical span at residues 264 to 284 (GGSVQVFHGMAAYFGLPEALM). Residues 285 to 286 (NR) lie on the Periplasmic side of the membrane. A helical membrane pass occupies residues 287 to 307 (FVGLVSFTAMFGSLLMWTATP). Residues 308–335 (VKIFFSEIPEGIFGKKTVELNENGVPAR) are Cytoplasmic-facing. The helical transmembrane segment at 336–356 (AAWIQFLIVIPLMIIPMLGSN) threads the bilayer. The Periplasmic portion of the chain corresponds to 357 to 364 (TVQDLMNT). A helical transmembrane segment spans residues 365–385 (IINMTAAASMLPPLFIMLAYL). Over 386–405 (NLRAKLDHLPRDFRMGSRRT) the chain is Cytoplasmic. The helical transmembrane segment at 406-426 (GIIVVSMLIAIFAVGFVASTF) threads the bilayer. At 427–431 (PTGAN) the chain is on the periplasmic side. The helical transmembrane segment at 432–452 (ILTIIFYNVGGIVIFLGFAWW) threads the bilayer. The Cytoplasmic segment spans residues 453–477 (KYSKYIKGLTAEERHIEATPASNVD).

Belongs to the amino acid-polyamine-organocation (APC) superfamily.

The protein resides in the cell inner membrane. This chain is Inner membrane transporter YgjI (ygjI), found in Escherichia coli (strain K12).